The primary structure comprises 400 residues: Enoyl-[acyl-carrier-protein] reductase [NADH] 1 (400 aa).

NAD(+) is bound by residues 48 to 53 (GASSGY), 74 to 75 (FE), 111 to 112 (DA), and 139 to 140 (LA). Y225 contacts substrate. Y235 serves as the catalytic Proton donor. NAD(+) is bound by residues K244 and 273 to 275 (VVT).

The protein belongs to the TER reductase family. As to quaternary structure, monomer.

It carries out the reaction a 2,3-saturated acyl-[ACP] + NAD(+) = a (2E)-enoyl-[ACP] + NADH + H(+). It participates in lipid metabolism; fatty acid biosynthesis. In terms of biological role, involved in the final reduction of the elongation cycle of fatty acid synthesis (FAS II). Catalyzes the reduction of a carbon-carbon double bond in an enoyl moiety that is covalently linked to an acyl carrier protein (ACP). This Vibrio vulnificus (strain CMCP6) protein is Enoyl-[acyl-carrier-protein] reductase [NADH] 1.